The chain runs to 1417 residues: DNA-directed RNA polymerase subunit beta' (1417 aa).

4 residues coordinate Zn(2+): Cys-71, Cys-73, Cys-86, and Cys-89. Mg(2+) contacts are provided by Asp-461, Asp-463, and Asp-465. Cys-815, Cys-889, Cys-896, and Cys-899 together coordinate Zn(2+).

Belongs to the RNA polymerase beta' chain family. As to quaternary structure, the RNAP catalytic core consists of 2 alpha, 1 beta, 1 beta' and 1 omega subunit. When a sigma factor is associated with the core the holoenzyme is formed, which can initiate transcription. Mg(2+) is required as a cofactor. The cofactor is Zn(2+).

The catalysed reaction is RNA(n) + a ribonucleoside 5'-triphosphate = RNA(n+1) + diphosphate. Its function is as follows. DNA-dependent RNA polymerase catalyzes the transcription of DNA into RNA using the four ribonucleoside triphosphates as substrates. The sequence is that of DNA-directed RNA polymerase subunit beta' from Pasteurella multocida (strain Pm70).